We begin with the raw amino-acid sequence, 39 residues long: Photosystem II reaction center protein L (39 aa).

The helical transmembrane segment at 18-38 threads the bilayer; that stretch reads SLYLGLLSVFVLGILFSSYFF.

It belongs to the PsbL family. In terms of assembly, PSII is composed of 1 copy each of membrane proteins PsbA, PsbB, PsbC, PsbD, PsbE, PsbF, PsbH, PsbI, PsbJ, PsbK, PsbL, PsbM, PsbT, PsbX, PsbY, Psb30/Ycf12, peripheral proteins PsbO, CyanoQ (PsbQ), PsbU, PsbV and a large number of cofactors. It forms dimeric complexes.

It localises to the cellular thylakoid membrane. Functionally, one of the components of the core complex of photosystem II (PSII). PSII is a light-driven water:plastoquinone oxidoreductase that uses light energy to abstract electrons from H(2)O, generating O(2) and a proton gradient subsequently used for ATP formation. It consists of a core antenna complex that captures photons, and an electron transfer chain that converts photonic excitation into a charge separation. This subunit is found at the monomer-monomer interface and is required for correct PSII assembly and/or dimerization. This is Photosystem II reaction center protein L from Prochlorococcus marinus (strain MIT 9301).